The primary structure comprises 278 residues: NADPH-dependent 7-cyano-7-deazaguanine reductase (278 aa).

87 to 89 lines the substrate pocket; that stretch reads IES. Residue 89-90 coordinates NADPH; sequence SK. The Thioimide intermediate role is filled by C185. The active-site Proton donor is D192. 224-225 contacts substrate; sequence HE. 253–254 lines the NADPH pocket; sequence RG. The tract at residues 255-278 is disordered; it reads GLDINPYRSTNPTFSVQNHRSFRQ. Residues 261 to 278 are compositionally biased toward polar residues; that stretch reads YRSTNPTFSVQNHRSFRQ.

This sequence belongs to the GTP cyclohydrolase I family. QueF type 2 subfamily. In terms of assembly, homodimer.

The protein localises to the cytoplasm. The enzyme catalyses 7-aminomethyl-7-carbaguanine + 2 NADP(+) = 7-cyano-7-deazaguanine + 2 NADPH + 3 H(+). It participates in tRNA modification; tRNA-queuosine biosynthesis. Functionally, catalyzes the NADPH-dependent reduction of 7-cyano-7-deazaguanine (preQ0) to 7-aminomethyl-7-deazaguanine (preQ1). The polypeptide is NADPH-dependent 7-cyano-7-deazaguanine reductase (Coxiella burnetii (strain Dugway 5J108-111)).